Here is a 171-residue protein sequence, read N- to C-terminus: CS1 fimbrial subunit A (171 aa).

The N-terminal stretch at 1-23 (MKLKKTIGAMALATLFATMGASA) is a signal peptide.

The protein belongs to the fimbrial CS1 protein family.

Its subcellular location is the fimbrium. In terms of biological role, fimbriae (also called pili), polar filaments radiating from the surface of the bacterium to a length of 0.5-1.5 micrometers and numbering 100-300 per cell, enable bacteria to colonize the epithelium of specific host organs. This Escherichia coli protein is CS1 fimbrial subunit A (csoA).